Here is a 309-residue protein sequence, read N- to C-terminus: Short-chain dehydrogenase/reductase ARMGADRAFT_1048226 (309 aa).

K64, D86, N113, and K145 together coordinate NADP(+). Residue S167 is the Proton donor of the active site. Positions 196 and 200 each coordinate NADP(+). Y196 acts as the Proton acceptor in catalysis. K200 (lowers pKa of active site Tyr) is an active-site residue.

This sequence belongs to the short-chain dehydrogenases/reductases (SDR) family.

It participates in secondary metabolite biosynthesis. In terms of biological role, short-chain dehydrogenase/reductase, part of the gene cluster that mediates the biosynthesis of melleolides, a range of antifungal and phytotoxic polyketide derivatives composed of an orsellinic acid (OA) moiety esterified to various sesquiterpene alcohols. The first step in melleolides biosynthesis is performed by the delta(6)-protoilludene synthase PRO1 which catalyzes the cyclization of farnesyl diphosphate to protoilludene. The orsellinic acid synthase armB produces OA by condensing acetyl-CoA with 3 malonyl-CoA units in a three-round chain elongation reaction folowed by a C2-C7 ring closure. ArmB further catalyzes the trans-esterification of OA to the various sesquiterpene alcohols resulting from the hydroxylation of protoilludene. The melleolides cluster also includes 5 cytochrome P450 monooxygenases, 4 NAD(+)-dependent oxidoreductases, one flavin-dependent oxidoreductase, and one O-methyltransferase. The cytochrome P450 monooxygenases may be involved in protoilludene hydroxylation to elaborate melleolides with multiple alcohol groups, such as melleolide D, which carries alcohol functionalities at C-4, C-5, C-10, and C-13. The role of the NAD(+)-dependent enzymes remains unknown. Numerous melleolides, including arnamial, show 5'-O-methylation of the aromatic moiety which may be catalyzed by the methyltransferase encoded in the cluster. The flavin-dependent oxidoreductase might represent the dehydrogenase yielding the aldehyde in position 1 of arnamial and other melleolides. Finally, several halogenase localized outside of the cluster, are able to catalyze the transfer of a single chlorine atom to the melleolide backbone, resulting in a 6'-chloromelleolide product. The protein is Short-chain dehydrogenase/reductase ARMGADRAFT_1048226 of Armillaria gallica (Bulbous honey fungus).